Consider the following 385-residue polypeptide: MAVPPSAPVPCSPFYLRRQEACPQCSWSMEEKAVASASCWEPPGPPRAAVPCFAIAVDQDDILPGALRLIRELRPHWKPEQVRTKRFKDGITNKLLACYVEEDMRDCVLVRVYGEWTELLVDRENEIRNFQLLRAHGCAPKLYCTFQNGLCYEYMQGVALGPEHIREPQLFRLIALEMAKIHTIHANGSLPKPTLWHKMHRYFTLVKDEISPSLSADVPKVEVLEQELAWLKEHLSQLDSPVVFCHNDLLCKNIIYDSDKGHVRFIDYEYAGYNYQAFDIGNHFNEFAGVNEVDYCRYPAREIQLQWLRYYLEAQKGTAASPREVERLYAQVNKFALASHFFWALWALIQNQYSTINFDFLRYAVIRFNQYFKVKPQVSALEMPK.

It belongs to the choline/ethanolamine kinase family.

The catalysed reaction is ethanolamine + ATP = phosphoethanolamine + ADP + H(+). The protein operates within phospholipid metabolism; phosphatidylethanolamine biosynthesis; phosphatidylethanolamine from ethanolamine: step 1/3. Its function is as follows. Highly specific for ethanolamine phosphorylation. Does not have choline kinase activity. This chain is Ethanolamine kinase 2 (Etnk2), found in Rattus norvegicus (Rat).